Consider the following 326-residue polypeptide: Acetyl-coenzyme A carboxylase carboxyl transferase subunit alpha (326 aa).

Residues 44–298 (QLESRAEQLR…KEALLFHLNT (255 aa)) enclose the CoA carboxyltransferase C-terminal domain.

It belongs to the AccA family. As to quaternary structure, acetyl-CoA carboxylase is a heterohexamer composed of biotin carboxyl carrier protein (AccB), biotin carboxylase (AccC) and two subunits each of ACCase subunit alpha (AccA) and ACCase subunit beta (AccD).

The protein localises to the cytoplasm. It catalyses the reaction N(6)-carboxybiotinyl-L-lysyl-[protein] + acetyl-CoA = N(6)-biotinyl-L-lysyl-[protein] + malonyl-CoA. It functions in the pathway lipid metabolism; malonyl-CoA biosynthesis; malonyl-CoA from acetyl-CoA: step 1/1. Functionally, component of the acetyl coenzyme A carboxylase (ACC) complex. First, biotin carboxylase catalyzes the carboxylation of biotin on its carrier protein (BCCP) and then the CO(2) group is transferred by the carboxyltransferase to acetyl-CoA to form malonyl-CoA. This is Acetyl-coenzyme A carboxylase carboxyl transferase subunit alpha from Synechocystis sp. (strain ATCC 27184 / PCC 6803 / Kazusa).